Reading from the N-terminus, the 201-residue chain is Sterile alpha motif domain-containing protein 12 (201 aa).

The region spanning 77–143 (WTQQDVCKWL…LQQVLQLKVR (67 aa)) is the SAM domain.

In terms of tissue distribution, expressed in the brain.

The sequence is that of Sterile alpha motif domain-containing protein 12 (SAMD12) from Homo sapiens (Human).